Here is a 379-residue protein sequence, read N- to C-terminus: Dual-specificity RNA methyltransferase RlmN (379 aa).

Catalysis depends on glutamate 95, which acts as the Proton acceptor. In terms of domain architecture, Radical SAM core spans 101 to 345; that stretch reads EETRGTLCVS…TTVRKTRGDD (245 aa). A disulfide bridge links cysteine 108 with cysteine 350. [4Fe-4S] cluster is bound by residues cysteine 115, cysteine 119, and cysteine 122. Residues 176-177, serine 208, 230-232, and asparagine 307 contribute to the S-adenosyl-L-methionine site; these read GE and SLH. Cysteine 350 functions as the S-methylcysteine intermediate in the catalytic mechanism.

It belongs to the radical SAM superfamily. RlmN family. The cofactor is [4Fe-4S] cluster.

The protein resides in the cytoplasm. It carries out the reaction adenosine(2503) in 23S rRNA + 2 reduced [2Fe-2S]-[ferredoxin] + 2 S-adenosyl-L-methionine = 2-methyladenosine(2503) in 23S rRNA + 5'-deoxyadenosine + L-methionine + 2 oxidized [2Fe-2S]-[ferredoxin] + S-adenosyl-L-homocysteine. The enzyme catalyses adenosine(37) in tRNA + 2 reduced [2Fe-2S]-[ferredoxin] + 2 S-adenosyl-L-methionine = 2-methyladenosine(37) in tRNA + 5'-deoxyadenosine + L-methionine + 2 oxidized [2Fe-2S]-[ferredoxin] + S-adenosyl-L-homocysteine. In terms of biological role, specifically methylates position 2 of adenine 2503 in 23S rRNA and position 2 of adenine 37 in tRNAs. m2A2503 modification seems to play a crucial role in the proofreading step occurring at the peptidyl transferase center and thus would serve to optimize ribosomal fidelity. This is Dual-specificity RNA methyltransferase RlmN from Burkholderia ambifaria (strain MC40-6).